The primary structure comprises 574 residues: Putative diflavin flavoprotein A 3 (574 aa).

A zinc metallo-hydrolase region spans residues 43–236 (QNGTTYNSFL…PSVKMIATGH (194 aa)). Fe cation contacts are provided by H92, E94, D96, H159, D178, and H236. The Flavodoxin-like domain occupies 265-409 (IGVFYVSEYG…DLGQWVTRDR (145 aa)). Residues 410-574 (SIKAMKSLGA…VHHRKVGNHY (165 aa)) are flavodoxin-reductase-like.

This sequence in the N-terminal section; belongs to the zinc metallo-hydrolase group 3 family. The protein in the C-terminal section; belongs to the flavodoxin reductase family. Fe cation serves as cofactor.

Functionally, mediates electron transfer from NADH to oxygen, reducing it to water. This modular protein has 3 redox cofactors, in other organisms the same activity requires 2 or 3 proteins. This Nostoc sp. (strain PCC 7120 / SAG 25.82 / UTEX 2576) protein is Putative diflavin flavoprotein A 3 (dfa3).